The following is a 150-amino-acid chain: Ribonuclease H (150 aa).

The RNase H type-1 domain maps to M1–I141. Mg(2+) contacts are provided by D9, E47, D69, and D133.

It belongs to the RNase H family. Monomer. Mg(2+) serves as cofactor.

Its subcellular location is the cytoplasm. It catalyses the reaction Endonucleolytic cleavage to 5'-phosphomonoester.. Functionally, endonuclease that specifically degrades the RNA of RNA-DNA hybrids. This Xanthomonas campestris pv. campestris (strain 8004) protein is Ribonuclease H.